A 382-amino-acid polypeptide reads, in one-letter code: D-galactonate dehydratase (382 aa).

D183 contributes to the Mg(2+) binding site. H185 functions as the Proton donor in the catalytic mechanism. Mg(2+) is bound by residues E209 and E235. The Proton acceptor role is filled by H285.

It belongs to the mandelate racemase/muconate lactonizing enzyme family. GalD subfamily. It depends on Mg(2+) as a cofactor.

The catalysed reaction is D-galactonate = 2-dehydro-3-deoxy-D-galactonate + H2O. It participates in carbohydrate acid metabolism; D-galactonate degradation; D-glyceraldehyde 3-phosphate and pyruvate from D-galactonate: step 1/3. In terms of biological role, catalyzes the dehydration of D-galactonate to 2-keto-3-deoxy-D-galactonate. The chain is D-galactonate dehydratase from Ralstonia nicotianae (strain ATCC BAA-1114 / GMI1000) (Ralstonia solanacearum).